The sequence spans 391 residues: Phosphoglycerate kinase (391 aa).

Substrate is bound by residues 21–23, R36, 59–62, R114, and R147; these read DLN and HLGR. ATP contacts are provided by residues K198, E315, and 344–347; that span reads GGDT.

Belongs to the phosphoglycerate kinase family. Monomer.

It localises to the cytoplasm. The catalysed reaction is (2R)-3-phosphoglycerate + ATP = (2R)-3-phospho-glyceroyl phosphate + ADP. It participates in carbohydrate degradation; glycolysis; pyruvate from D-glyceraldehyde 3-phosphate: step 2/5. This Actinobacillus pleuropneumoniae serotype 5b (strain L20) protein is Phosphoglycerate kinase.